The primary structure comprises 229 residues: Putative germin-like protein subfamily 1 member 2 (229 aa).

The N-terminal stretch at 1–24 (MKGLVQFLVAKIILLVLASTFVHC) is a signal peptide. An intrachain disulfide couples Cys-34 to Cys-50. Residues Asn-38 and Asn-71 are each glycosylated (N-linked (GlcNAc...) asparagine). The 152-residue stretch at 64–215 (SGLNIPGNTS…AFALDVNIVR (152 aa)) folds into the Cupin type-1 domain. The Mn(2+) site is built by His-112 and His-114. N-linked (GlcNAc...) asparagine glycosylation occurs at Asn-139. His-163 is a binding site for Mn(2+).

Belongs to the germin family. Oligomer (believed to be a pentamer but probably hexamer).

It is found in the secreted. The protein resides in the extracellular space. It localises to the apoplast. In terms of biological role, may play a role in plant defense. Probably has no oxalate oxidase activity even if the active site is conserved. The protein is Putative germin-like protein subfamily 1 member 2 of Arabidopsis thaliana (Mouse-ear cress).